A 67-amino-acid chain; its full sequence is DNA-directed RNA polymerase subunit omega (67 aa).

The protein belongs to the RNA polymerase subunit omega family. In terms of assembly, the RNAP catalytic core consists of 2 alpha, 1 beta, 1 beta' and 1 omega subunit. When a sigma factor is associated with the core the holoenzyme is formed, which can initiate transcription.

It carries out the reaction RNA(n) + a ribonucleoside 5'-triphosphate = RNA(n+1) + diphosphate. In terms of biological role, promotes RNA polymerase assembly. Latches the N- and C-terminal regions of the beta' subunit thereby facilitating its interaction with the beta and alpha subunits. This is DNA-directed RNA polymerase subunit omega from Burkholderia ambifaria (strain MC40-6).